The sequence spans 296 residues: Small ribosomal subunit protein uS2m (296 aa).

Residues 274-296 (QGQKEPGDQGPAHPPGADMSHSL) are disordered.

The protein belongs to the universal ribosomal protein uS2 family. Component of the mitochondrial small ribosomal subunit (mt-SSU). Mature mammalian 55S mitochondrial ribosomes consist of a small (28S) and a large (39S) subunit. The 28S small subunit contains a 12S ribosomal RNA (12S mt-rRNA) and 30 different proteins. The 39S large subunit contains a 16S rRNA (16S mt-rRNA), a copy of mitochondrial valine transfer RNA (mt-tRNA(Val)), which plays an integral structural role, and 52 different proteins.

The protein localises to the mitochondrion. Required for mitoribosome formation and stability, and mitochondrial translation. The sequence is that of Small ribosomal subunit protein uS2m (MRPS2) from Homo sapiens (Human).